The primary structure comprises 295 residues: Trimeric intracellular cation channel type A (295 aa).

Topologically, residues 1–18 (MEVLDVLNLGEIAQYFSK) are lumenal. A helical membrane pass occupies residues 19–37 (MAMFPVFDVAYYIVSILYL). Residues 38-51 (KYEPGAVEVSRRSP) are Cytoplasmic-facing. Residues 52–75 (VASWLCAMLYCFGSYILADIMLGV) form a helical membrane-spanning segment. Gly-74 lines the Ca(2+) pocket. Residues 76-86 (CPIDYFHNNSH) are Lumenal-facing. The helical transmembrane segment at 87 to 106 (ILLASAVWYLIFFCPLNLFY) threads the bilayer. Residues 107–144 (KCVAFMPVKLVLVALKEVVRTRKIAAGVHHAHHAYHHG) are Cytoplasmic-facing. A 1,2-diacyl-sn-glycero-3-phospho-(1D-myo-inositol-4,5-bisphosphate) contacts are provided by Lys-122 and Arg-126. A helical transmembrane segment spans residues 145 to 162 (WLIMVITGYVKGSGVALM). Over 163–182 (SNFEQLLRGVWKPETNEVLN) the chain is Lumenal. The chain crosses the membrane as a helical span at residues 183 to 199 (MSFPTKASLYGAILFTL). Topologically, residues 200–210 (QEAHVLPVSKS) are cytoplasmic. Residues 211 to 227 (TLICLFTLFMVSSKVFM) traverse the membrane as a helical segment. At 228–236 (TARHSHGSP) the chain is on the lumenal side. A helical transmembrane segment spans residues 237-255 (FALIESWVCHVLFGSPLGT). Topologically, residues 256-295 (EDAHDHHHAAPAAAPAPLSPAKNKEELSEGTRKRKSKKAE) are cytoplasmic. The segment at 259–295 (HDHHHAAPAAAPAPLSPAKNKEELSEGTRKRKSKKAE) is disordered. A compositionally biased stretch (low complexity) spans 265–276 (APAAAPAPLSPA). The segment covering 277 to 286 (KNKEELSEGT) has biased composition (basic and acidic residues).

The protein belongs to the TMEM38 family. In terms of assembly, homotrimer; conformation seems to be controled by binding to diacylglycerol (DAG).

It is found in the sarcoplasmic reticulum membrane. Its subcellular location is the nucleus membrane. The catalysed reaction is K(+)(in) = K(+)(out). Channel activity is activated by a change of voltage within the sarcoplasmic reticulum lumen and blocked by luminal high Ca(2+) levels. Its function is as follows. Intracellular monovalent cation channel required for maintenance of rapid intracellular calcium release. Acts as a potassium counter-ion channel that functions in synchronization with calcium release from intracellular stores. Opened by a change of voltage within the sarcoplasmic reticulum lumen. This is Trimeric intracellular cation channel type A (tmem38a) from Danio rerio (Zebrafish).